Consider the following 280-residue polypeptide: Four and a half LIM domains protein 3 (280 aa).

An N-acetylserine modification is found at Ser2. A C4-type zinc finger spans residues 7–31 (CAKCNESLYGRKYIQTDSGPYCVPC). LIM zinc-binding domains are found at residues 40-92 (CAEC…CNDC) and 101-153 (CSAC…CVPC). Lys157 carries the N6-acetyllysine modification. LIM zinc-binding domains follow at residues 162 to 212 (CARC…CVAC) and 221 to 275 (CSSC…CQGC). Lys235 is modified (N6-acetyllysine).

In terms of assembly, interacts with SOX15; the interaction recruits FHL3 to FOXK1 promoters where it acts as a transcriptional coactivator of FOXK1. As to expression, expressed only in skeletal muscle.

It is found in the nucleus. The protein localises to the cytoplasm. Functionally, recruited by SOX15 to FOXK1 promoters where it acts as a transcriptional coactivator of FOXK1. The sequence is that of Four and a half LIM domains protein 3 (FHL3) from Homo sapiens (Human).